The primary structure comprises 188 residues: Mitochondrial import receptor subunit TOM20 homolog (188 aa).

Topologically, residues 1–12 (MSDTILGFNKSN) are mitochondrial intermembrane. Residues 13 to 31 (VVLAAGIAGAAFLGYCIYF) traverse the membrane as a helical segment. At 32-188 (DHKRINAPDY…ELIDDTDDLE (157 aa)) the chain is on the cytoplasmic side. Disordered stretches follow at residues 42 to 73 (KDKI…AAPD) and 156 to 188 (DEAE…DDLE). Positions 58 to 67 (MAPRRPAAAG) are enriched in low complexity.

This sequence belongs to the Tom20 family. Forms part of the preprotein translocase complex of the outer mitochondrial membrane (TOM complex).

The protein resides in the mitochondrion outer membrane. Functionally, central component of the receptor complex responsible for the recognition and translocation of cytosolically synthesized mitochondrial preproteins. Together with tomm-22 functions as the transit peptide receptor at the surface of the mitochondrion outer membrane and facilitates the movement of preproteins into the translocation pore. This chain is Mitochondrial import receptor subunit TOM20 homolog, found in Caenorhabditis elegans.